We begin with the raw amino-acid sequence, 193 residues long: dCTP deaminase, dUMP-forming (193 aa).

Residues 107-112 (RSSLGR), Asp125, 133-135 (TLE), Gln154, and Tyr168 contribute to the dCTP site. Glu135 serves as the catalytic Proton donor/acceptor. The tract at residues 169-193 (AESSGKYHGDERPSPSKMHLDFCRG) is disordered. A compositionally biased stretch (basic and acidic residues) spans 173–193 (GKYHGDERPSPSKMHLDFCRG).

It belongs to the dCTP deaminase family. In terms of assembly, homotrimer.

The catalysed reaction is dCTP + 2 H2O = dUMP + NH4(+) + diphosphate. It participates in pyrimidine metabolism; dUMP biosynthesis; dUMP from dCTP: step 1/1. Its function is as follows. Bifunctional enzyme that catalyzes both the deamination of dCTP to dUTP and the hydrolysis of dUTP to dUMP without releasing the toxic dUTP intermediate. The polypeptide is dCTP deaminase, dUMP-forming (Methanopyrus kandleri (strain AV19 / DSM 6324 / JCM 9639 / NBRC 100938)).